Reading from the N-terminus, the 614-residue chain is Putative ankyrin repeat protein RBE_0997 (614 aa).

ANK repeat units follow at residues 3-32 (KDEELLIEAIENDDLKEVQKLLQEGVDPNI), 36-65 (DDKPCILSAIRNKNLDIVSVLLENGANPNA), 69-98 (DGEPIISAAIRTKRLDIINILLENRADPNL), 102-131 (RKNTILLKAIQSNNLDIVNAFLNKGANLNA), 135-164 (SGYPIFLKAIKSENLEIINALLEKGANPNL), 168-197 (DGSPLLFTAINTKNLDIIDALIKMGANVEA), 201-231 (DGNTVLNVLLERRGNVNIISLLIENSQDKEK), 239-268 (NGETFLHLAAQQGNSKIFDKYLDYYPTVNI), and 272-301 (AGYTPLYWSKLLGHTEISNKLIERAEELKE). Residues 348-580 (NVEDIDYRKI…VQSAETFMNK (233 aa)) enclose the Glutamine amidotransferase type-1 domain. Cysteine 444 (nucleophile) is an active-site residue. Residues histidine 547 and glutamate 549 contribute to the active site.

The polypeptide is Putative ankyrin repeat protein RBE_0997 (Rickettsia bellii (strain RML369-C)).